The sequence spans 881 residues: Envelope glycoprotein gp160 (881 aa).

Residues 1–22 (MGCLKNQLLIAILLLSVYGIYC) form the signal peptide. Residues 23 to 696 (TQYVTVFYGV…ASWIKYIQYG (674 aa)) lie on the Extracellular side of the membrane. An N-linked (GlcNAc...) asparagine; by host glycan is attached at Asn-37. Cysteines 44 and 57 form a disulfide. 18 N-linked (GlcNAc...) asparagine; by host glycosylation sites follow: Asn-70, Asn-114, Asn-148, Asn-158, Asn-173, Asn-186, Asn-200, Asn-204, Asn-214, Asn-246, Asn-249, Asn-280, Asn-286, Asn-297, Asn-308, Asn-318, Asn-373, and Asn-379. 5 cysteine pairs are disulfide-bonded: Cys-101/Cys-222, Cys-108/Cys-213, Cys-113/Cys-170, Cys-235/Cys-265, and Cys-245/Cys-257. Residues 113-169 (CNKSETDRWGLTKSSTTITTAAPTSAPVSEKLDMVNETSSCIAQNNCTGLEQEQMIS) are V1. Residues 170 to 213 (CKFNMTGLKRDKTKEYNETWYSTDLVCEQRNSTDNESRCYMNHC) are V2. Positions 313–345 (CRRPGNKTVLPVTIMSELVFHSQPINDRPKQAW) are V3. Cys-313 and Cys-346 are oxidised to a cystine. Cystine bridges form between Cys-397–Cys-461 and Cys-404–Cys-434. The segment at 404–434 (CKMNWFLNWVEDKDVTTQRPKERHRKNYVPC) is V4. N-linked (GlcNAc...) asparagine; by host glycosylation is found at Asn-462 and Asn-478. Residues 477 to 484 (GNQTSITM) form a V5 region. Positions 528–548 (GVFVLGFLGFLATAGSAIGAV) are fusion peptide. Residues 591–607 (LQTKVTAIEKYLKDQAQ) are immunosuppression. N-linked (GlcNAc...) asparagine; by host glycosylation is found at Asn-627, Asn-636, and Asn-652. The stretch at 636–668 (NDTWQEWERKVDFLEENITALLEEAQIQQEKNM) forms a coiled coil. The tract at residues 673-694 (KLNSWDVFGNWFDLASWIKYIQ) is MPER; binding to GalCer. The helical transmembrane segment at 697 to 717 (IYVVVGVILLRIVIYIVQMLA) threads the bilayer. At 718–881 (KLRQGYRPVF…IRQGLELTLL (164 aa)) the chain is on the cytoplasmic side. The YXXV motif; contains endocytosis signal motif lies at 723 to 726 (YRPV). The interval 737 to 761 (THTQQDPALPTREGKEGDGGEGGGN) is disordered. Cys-789 carries the S-palmitoyl cysteine; by host lipid modification. The short motif at 880–881 (LL) is the Di-leucine internalization motif element.

As to quaternary structure, the mature envelope protein (Env) consists of a homotrimer of non-covalently associated gp120-gp41 heterodimers. The resulting complex protrudes from the virus surface as a spike. Interacts with host CD4 and CCR5. Gp120 also interacts with the C-type lectins CD209/DC-SIGN and CLEC4M/DC-SIGNR (collectively referred to as DC-SIGN(R)). The mature envelope protein (Env) consists of a homotrimer of non-covalently associated gp120-gp41 heterodimers. The resulting complex protrudes from the virus surface as a spike. In terms of processing, specific enzymatic cleavages in vivo yield mature proteins. Envelope glycoproteins are synthesized as an inactive precursor that is heavily N-glycosylated and processed likely by host cell furin in the Golgi to yield the mature SU and TM proteins. The cleavage site between SU and TM requires the minimal sequence [KR]-X-[KR]-R. Post-translationally, palmitoylation of the transmembrane protein and of Env polyprotein (prior to its proteolytic cleavage) is essential for their association with host cell membrane lipid rafts. Palmitoylation is therefore required for envelope trafficking to classical lipid rafts, but not for viral replication.

The protein localises to the virion membrane. Its subcellular location is the host cell membrane. The protein resides in the host endosome membrane. Functionally, the surface protein gp120 (SU) attaches the virus to the host lymphoid cell by binding to the primary receptor CD4. This interaction induces a structural rearrangement creating a high affinity binding site for a chemokine coreceptor like CCR5. This peculiar 2 stage receptor-interaction strategy allows gp120 to maintain the highly conserved coreceptor-binding site in a cryptic conformation, protected from neutralizing antibodies. These changes are transmitted to the transmembrane protein gp41 and are thought to activate its fusogenic potential by unmasking its fusion peptide. In terms of biological role, surface protein gp120 (SU) may target the virus to gut-associated lymphoid tissue (GALT) by binding host ITGA4/ITGB7 (alpha-4/beta-7 integrins), a complex that mediates T-cell migration to the GALT. Interaction between gp120 and ITGA4/ITGB7 would allow the virus to enter GALT early in the infection, infecting and killing most of GALT's resting CD4+ T-cells. This T-cell depletion is believed to be the major insult to the host immune system leading to AIDS. Its function is as follows. The surface protein gp120 is a ligand for CD209/DC-SIGN and CLEC4M/DC-SIGNR, which are respectively found on dendritic cells (DCs), and on endothelial cells of liver sinusoids and lymph node sinuses. These interactions allow capture of viral particles at mucosal surfaces by these cells and subsequent transmission to permissive cells. DCs are professional antigen presenting cells, critical for host immunity by inducing specific immune responses against a broad variety of pathogens. They act as sentinels in various tissues where they take up antigen, process it, and present it to T-cells following migration to lymphoid organs. SIV subverts the migration properties of dendritic cells to gain access to CD4+ T-cells in lymph nodes. Virus transmission to permissive T-cells occurs either in trans (without DCs infection, through viral capture and transmission), or in cis (following DCs productive infection, through the usual CD4-gp120 interaction), thereby inducing a robust infection. In trans infection, bound virions remain infectious over days and it is proposed that they are not degraded, but protected in non-lysosomal acidic organelles within the DCs close to the cell membrane thus contributing to the viral infectious potential during DCs' migration from the periphery to the lymphoid tissues. On arrival at lymphoid tissues, intact virions recycle back to DCs' cell surface allowing virus transmission to CD4+ T-cells. Virion capture also seems to lead to MHC-II-restricted viral antigen presentation, and probably to the activation of SIV-specific CD4+ cells. The transmembrane protein gp41 (TM) acts as a class I viral fusion protein. Under the current model, the protein has at least 3 conformational states: pre-fusion native state, pre-hairpin intermediate state, and post-fusion hairpin state. During fusion of viral and target intracellular membranes, the coiled coil regions (heptad repeats) assume a trimer-of-hairpins structure, positioning the fusion peptide in close proximity to the C-terminal region of the ectodomain. The formation of this structure appears to drive apposition and subsequent fusion of viral and target cell membranes. Complete fusion occurs in host cell endosomes. The virus undergoes clathrin-dependent internalization long before endosomal fusion, thus minimizing the surface exposure of conserved viral epitopes during fusion and reducing the efficacy of inhibitors targeting these epitopes. Membranes fusion leads to delivery of the nucleocapsid into the cytoplasm. Functionally, the envelope glycoprotein gp160 precursor down-modulates cell surface CD4 antigen by interacting with it in the endoplasmic reticulum and blocking its transport to the cell surface. In terms of biological role, the gp120-gp41 heterodimer allows rapid transcytosis of the virus through CD4 negative cells such as simple epithelial monolayers of the intestinal, rectal and endocervical epithelial barriers. Both gp120 and gp41 specifically recognize glycosphingolipids galactosyl-ceramide (GalCer) or 3' sulfo-galactosyl-ceramide (GalS) present in the lipid rafts structures of epithelial cells. Binding to these alternative receptors allows the rapid transcytosis of the virus through the epithelial cells. This transcytotic vesicle-mediated transport of virions from the apical side to the basolateral side of the epithelial cells does not involve infection of the cells themselves. The chain is Envelope glycoprotein gp160 (env) from Simian immunodeficiency virus (isolate K78) (SIV-mac).